Reading from the N-terminus, the 60-residue chain is Large ribosomal subunit protein uL30 (60 aa).

The protein belongs to the universal ribosomal protein uL30 family. Part of the 50S ribosomal subunit.

This Pseudoalteromonas translucida (strain TAC 125) protein is Large ribosomal subunit protein uL30.